The following is a 207-amino-acid chain: Large ribosomal subunit protein uL4 (207 aa).

A disordered region spans residues 47–78; it reads GTASSKTRAEVRGGGKKPWRQKGTGRARVGSS. Over residues 60–71 the composition is skewed to basic residues; sequence GGKKPWRQKGTG.

It belongs to the universal ribosomal protein uL4 family. In terms of assembly, part of the 50S ribosomal subunit.

Its function is as follows. One of the primary rRNA binding proteins, this protein initially binds near the 5'-end of the 23S rRNA. It is important during the early stages of 50S assembly. It makes multiple contacts with different domains of the 23S rRNA in the assembled 50S subunit and ribosome. Forms part of the polypeptide exit tunnel. The chain is Large ribosomal subunit protein uL4 from Syntrophomonas wolfei subsp. wolfei (strain DSM 2245B / Goettingen).